The following is a 530-amino-acid chain: UDP-glucuronosyltransferase 1A8 (530 aa).

The N-terminal stretch at Met1–Ala25 is a signal peptide. 3 N-linked (GlcNAc...) asparagine glycosylation sites follow: Asn71, Asn292, and Asn430. A helical membrane pass occupies residues Val488–Tyr504.

This sequence belongs to the UDP-glycosyltransferase family. As to quaternary structure, homodimers. Homooligomer. Interacts with UGT1A1, UGT1A3, UGT1A4, UGT1A6, UGT1A7, UGT1A8, UGT1A9 and UGT1A10 to form heterodimers.

Its subcellular location is the endoplasmic reticulum membrane. It catalyses the reaction glucuronate acceptor + UDP-alpha-D-glucuronate = acceptor beta-D-glucuronoside + UDP + H(+). The enzyme catalyses 17beta-estradiol + UDP-alpha-D-glucuronate = 17beta-estradiol 3-O-(beta-D-glucuronate) + UDP + H(+). It carries out the reaction 17alpha-estradiol + UDP-alpha-D-glucuronate = 17alpha-estradiol 3-O-(beta-D-glucuronate) + UDP + H(+). The catalysed reaction is estrone + UDP-alpha-D-glucuronate = estrone 3-O-(beta-D-glucuronate) + UDP + H(+). It catalyses the reaction 16alpha,17alpha-estriol + UDP-alpha-D-glucuronate = 16alpha,17alpha-estriol 3-O-(beta-D-glucuronate) + UDP + H(+). The enzyme catalyses 2-hydroxy-17beta-estradiol + UDP-alpha-D-glucuronate = 2-hydroxy-17beta-estradiol 3-O-(beta-D-glucuronate) + UDP + H(+). It carries out the reaction 2-hydroxy-17beta-estradiol + UDP-alpha-D-glucuronate = 17beta-estradiol 2-O-(beta-D-glucuronate) + UDP + H(+). The catalysed reaction is 2-hydroxyestrone + UDP-alpha-D-glucuronate = 2-hydroxyestrone 3-O-(beta-D-glucuronate) + UDP + H(+). It catalyses the reaction 4-hydroxy-17beta-estradiol + UDP-alpha-D-glucuronate = 4-hydroxy-17beta-estradiol 3-O-(beta-D-glucuronate) + UDP + H(+). The enzyme catalyses 4-hydroxy-17beta-estradiol + UDP-alpha-D-glucuronate = 17beta-estradiol 4-O-(beta-D-glucuronate) + UDP + H(+). It carries out the reaction 4-hydroxyestrone + UDP-alpha-D-glucuronate = 4-hydroxyestrone 3-O-(beta-D-glucuronate) + UDP + H(+). The catalysed reaction is 4-hydroxyestrone + UDP-alpha-D-glucuronate = estrone 4-O-(beta-D-glucuronate) + UDP + H(+). It catalyses the reaction 2-methoxy-17beta-estradiol + UDP-alpha-D-glucuronate = 2-methoxy-17beta-estradiol 3-O-(beta-D-glucuronate) + UDP + H(+). The enzyme catalyses 2-methoxyestrone + UDP-alpha-D-glucuronate = 2-methoxyestrone 3-O-(beta-D-glucuronate) + UDP + H(+). It carries out the reaction 4-methoxy-17beta-estradiol + UDP-alpha-D-glucuronate = 4-methoxy-17beta-estradiol 3-O-(beta-D-glucuronate) + UDP + H(+). The catalysed reaction is 4-methoxyestrone + UDP-alpha-D-glucuronate = 4-methoxyestrone 3-O-(beta-D-glucuronate) + UDP + H(+). It catalyses the reaction 17beta-hydroxy-5alpha-androstan-3-one + UDP-alpha-D-glucuronate = 5alpha-dihydrotestosterone 17-O-(beta-D-glucuronate) + UDP + H(+). The enzyme catalyses 5alpha-dihydrotestosterone 17-O-(beta-D-glucuronate) + UDP-alpha-D-glucuronate = 5alpha-dihydrotestosterone 17-O-[beta-D-glucuronosyl-(1-&gt;2)-glucuronate] + UDP + H(+). It carries out the reaction prunetin + UDP-alpha-D-glucuronate = prunetin-4'-O-beta-D-glucuronide + UDP. The catalysed reaction is prunetin + UDP-alpha-D-glucuronate = prunetin-5-O-beta-D-glucuronide + UDP. It catalyses the reaction (E)-ferulate + UDP-alpha-D-glucuronate = (E)-4-O-(beta-D-glucuronosyl)-ferulate + UDP + H(+). The enzyme catalyses (E)-ferulate + UDP-alpha-D-glucuronate = (E)-ferulic acid beta-D-glucuronate ester + UDP. It carries out the reaction candesartan + UDP-alpha-D-glucuronate = candesartan O-beta-D-glucuronoside + UDP. The catalysed reaction is mycophenolate + UDP-alpha-D-glucuronate = mycophenolate 7-O-beta-D-glucuronide + UDP + H(+). UDP-glucuronosyltransferase (UGT) that catalyzes phase II biotransformation reactions in which lipophilic substrates are conjugated with glucuronic acid to increase the metabolite's water solubility, thereby facilitating excretion into either the urine or bile. Essential for the elimination and detoxification of drugs, xenobiotics and endogenous compounds. Catalyzes the glucuronidation of endogenous steroid hormones such as androgens and estrogens. Produces dihydrotestosterone (DHT) diglucuronide from the DHT after two subsequent glucoronidation steps. Involved in the glucuronidation of the phytochemical ferulic acid at the phenolic or the carboxylic acid group. Also catalyzes the glucuronidation of the isoflavones genistein, daidzein, glycitein, formononetin, biochanin A and prunetin, which are phytoestrogens with anticancer and cardiovascular properties. Involved in the glucuronidation of the AGTR1 angiotensin receptor antagonist caderastan, a drug which can inhibit the effect of angiotensin II. Also metabolizes mycophenolate, an immunosuppressive agent. This is UDP-glucuronosyltransferase 1A8 from Rattus norvegicus (Rat).